The sequence spans 281 residues: Large ribosomal subunit protein uL2 (281 aa).

Positions 224–281 (RGSAMNPNDHPHGGGEGHQPIGRKSPMTPWGKKALGVKTRKTKKASNQFIIRRRKESK) are disordered.

This sequence belongs to the universal ribosomal protein uL2 family. Part of the 50S ribosomal subunit. Forms a bridge to the 30S subunit in the 70S ribosome.

Its function is as follows. One of the primary rRNA binding proteins. Required for association of the 30S and 50S subunits to form the 70S ribosome, for tRNA binding and peptide bond formation. It has been suggested to have peptidyltransferase activity; this is somewhat controversial. Makes several contacts with the 16S rRNA in the 70S ribosome. The protein is Large ribosomal subunit protein uL2 of Metamycoplasma arthritidis (strain 158L3-1) (Mycoplasma arthritidis).